The chain runs to 382 residues: Alkanesulfonate monooxygenase (382 aa).

This sequence belongs to the SsuD family.

The enzyme catalyses an alkanesulfonate + FMNH2 + O2 = an aldehyde + FMN + sulfite + H2O + 2 H(+). In terms of biological role, catalyzes the desulfonation of aliphatic sulfonates. In Pseudomonas putida (strain W619), this protein is Alkanesulfonate monooxygenase.